The chain runs to 1342 residues: MVYSYTEKKRIRKDFGKRPKVLDIPYLLSIQLNSFKKFIQPDLSGQHGLEAAFRSVFPIRGYNGNSELQYVSYRLGETIFDVKECQIRGATYSAPLRVKLRLVIYERDILEATVKDIKEQEVYMGEIPLMTNNGTFIINGTERVVVSQLHRSPGVFFDSDKGKTHSSGKVLYNARIIPYRGSWLDFEFDPKDNLFVRIDRRRKLPVSIILRALNYNTEEILNIFFEKNIFKIENNKIVLELVPERLRGETASFNIKKNGIIYVEKGRRITAKHIQELKNNKIKSITVPVEYILGRIVSKNYVDKKTGETIISSNTELSLEILEKLKKSGFYSIETLFTNDLDHGPYISETLRIDSSNDRMSALIEIYRVMRPGEPPTKEATENLFENLFFSEDRYDLSTVGRMKFNRSLLREETKGSSTLNKEDIIDVIKKIIDIRNGKGEVDDIDHLGNRRVRSVGEMAENQFRIGLVRVERAVKERLSIGDLDTLMPQDMINAKPISAAVKEFFGSSQLSQFMDQNNPLSEITHKRRISALGLGGLTRERAGFEVRDVHPTHYGRVCPIETPEGPNIGLINSLSVYAQTNSYGFLETPYRKVCNGLVSEEIHYLSAIEEGNYIIAQANTNIDKTGFFTDDLVTCRHKGESSLFNRNQVNYMDVSTQQIVSVGASLIPFLEHDDANRALMGANMQRQAVPTLKTDKPLIGTGMERAVAVDSGVTAVAKRSGVVQYVDASRIVIKVDEKEMYSREAGIDIYNLTKYTRSNQNTCINQQPCVNLGEKIKKGDVLADGPSTDLGELALGQNMRVAFMPWNGYNFEDSILVSERVVQEDRFTTIHIQELSCISRDTKLGAEEISSDIPNVGEAALSKLDESGIVYIGAEVTGGDILVGKVTPKGETQLTPEEKLLRAIFGEKASDVKDSSLRVPNGVSGTVIDVQIFTRDGVKKDKRALEIEDMQLKKIKQDLTEEFKIFESSLFTHIKKTFISLDIETKQLDTLPFEKWFSVDIKQKDKKKEIEKLAKQHHELKEEFNKKIEIKRQKITQGDDLAPGVLKIVKVYLAVKRQIQPGDKMAGRHGNKGVISKINPVEDMPYDENGIPVDIVLNPLGVPSRMNIGQILETHLGMAAKGIGDKINHMLKTQEKISNLRKFIQKAFDLGDNLRQKVNLDTFSNEEILRLAKNLKNGIPISTPVFDGAQENEIKQMLKFAGLPTSGQIILFDGRTGEKFERPVTVGYMYMLKLNHLVDDKMHARSTGSYSLVTQQPLGGKAQFGGQRFGEMEVWALEAYGASYTLQEMLTVKSDDVNGRTKMYKNIVDGNHQMEPGMPESFNVLLKEIRSLGINIELESE.

It belongs to the RNA polymerase beta chain family. As to quaternary structure, the RNAP catalytic core consists of 2 alpha, 1 beta, 1 beta' and 1 omega subunit. When a sigma factor is associated with the core the holoenzyme is formed, which can initiate transcription.

It catalyses the reaction RNA(n) + a ribonucleoside 5'-triphosphate = RNA(n+1) + diphosphate. Functionally, DNA-dependent RNA polymerase catalyzes the transcription of DNA into RNA using the four ribonucleoside triphosphates as substrates. This chain is DNA-directed RNA polymerase subunit beta, found in Buchnera aphidicola subsp. Acyrthosiphon pisum (strain Tuc7).